A 386-amino-acid polypeptide reads, in one-letter code: Alcohol dehydrogenase-like 2 (386 aa).

Residues C51, T53, H74, C104, C107, C110, C118, and C183 each contribute to the Zn(2+) site. An alcohol contacts are provided by T53 and H74. T53 is a binding site for NAD(+). NAD(+) contacts are provided by residues G208 to G213, D232, K237, L302 to M304, F329, and R379.

It belongs to the zinc-containing alcohol dehydrogenase family. Class-III subfamily. In terms of assembly, homodimer. It depends on Zn(2+) as a cofactor.

Its subcellular location is the cytoplasm. The catalysed reaction is a primary alcohol + NAD(+) = an aldehyde + NADH + H(+). It catalyses the reaction a secondary alcohol + NAD(+) = a ketone + NADH + H(+). In Arabidopsis thaliana (Mouse-ear cress), this protein is Alcohol dehydrogenase-like 2.